We begin with the raw amino-acid sequence, 342 residues long: Cathepsin B-like cysteine proteinase 1 (342 aa).

Residues 1 to 18 (MKYLVLALCTYLCSQTGA) form the signal peptide. The propeptide at 19–86 (DENAAQGIPL…VKEDPDPEVD (68 aa)) is activation peptide. An N-linked (GlcNAc...) asparagine glycan is attached at Asn99. Intrachain disulfides connect Cys100–Cys128, Cys111–Cys156, Cys147–Cys214, Cys148–Cys152, Cys185–Cys218, and Cys193–Cys205. Cys114 is an active-site residue. Residue Asn138 is glycosylated (N-linked (GlcNAc...) asparagine). Residue Asn198 is glycosylated (N-linked (GlcNAc...) asparagine). His285 is a catalytic residue. Residue Asn296 is glycosylated (N-linked (GlcNAc...) asparagine). Residue Asn305 is part of the active site.

Belongs to the peptidase C1 family.

Expression of the protease correlates with blood-feeding and suggests a role for the protease in blood digestion. This chain is Cathepsin B-like cysteine proteinase 1 (AC-1), found in Haemonchus contortus (Barber pole worm).